The sequence spans 110 residues: MKRSHKDYLEDIAEAIELIEEFTREICFEDFLCDKKTQFAVIRALEIIGEASKNIPNDFKRLHPEIPWREMARMRDKLIHAYFGVDVRVLWKTVKEDIPSLKGKFEKLRK.

Catalysis depends on residues arginine 75 and histidine 80. The RX(4)HXY motif signature appears at 75–82; that stretch reads RDKLIHAY. The residue at position 82 (tyrosine 82) is an O-di-AMP-tyrosine.

The protein belongs to the HepT RNase toxin family. In terms of processing, modified by cognate antitoxin MntA; probably at least 2 successive AMPylation events occur on Tyr-82.

Toxic component of a type VII toxin-antitoxin (TA) system. Overexpression in E.coli inhibits cell growth. Neutralized by cognate antitoxin MntA. Neutralization is probably due to AMPylation by MntA. Probably an RNAase. This is Probable ribonuclease HepT from Thermococcus cleftensis (strain DSM 27260 / KACC 17922 / CL1).